The sequence spans 337 residues: G-protein coupled receptor 65 (337 aa).

The Extracellular segment spans residues 1 to 5 (MNSTC). A glycan (N-linked (GlcNAc...) asparagine) is linked at Asn2. Disulfide bonds link Cys5–Cys160 and Cys87–Cys170. The chain crosses the membrane as a helical span at residues 6-42 (IEEQHDLDHYLFPIVYIFVIIVSIPANIGSLCVSFLQ). At 43–46 (AKKE) the chain is on the cytoplasmic side. Residues 47–77 (SELGIYLFSLSLSDLLYALTLPLWIDYTWNK) form a helical membrane-spanning segment. Residues 78–82 (DNWTF) are Extracellular-facing. Residue Asn79 is glycosylated (N-linked (GlcNAc...) asparagine). The helical transmembrane segment at 83–118 (SPALCKGSAFLMYMNFYSSTAFLTCIAVDRYLAVVY) threads the bilayer. At 119-126 (PLKFFFLR) the chain is on the cytoplasmic side. Residues 127–153 (TRRFALMVSLSIWILETIFNAVMLWED) form a helical membrane-spanning segment. At 154–174 (ETVVEYCDAEKSNFTLCYDKY) the chain is on the extracellular side. An extracellular loop 2 (ECL2) region spans residues 154–174 (ETVVEYCDAEKSNFTLCYDKY). The N-linked (GlcNAc...) asparagine glycan is linked to Asn166. The chain crosses the membrane as a helical span at residues 175–212 (PLEKWQINLNLFRTCTGYAIPLVTILICNRKVYQAVRH). Residues 213–216 (NKAT) lie on the Cytoplasmic side of the membrane. A helical transmembrane segment spans residues 217–252 (ENKEKKRIIKLLVSITVTFVLCFTPFHVMLLIRCIL). At 253-264 (EHAVNFEDHSNS) the chain is on the extracellular side. Residues 265-293 (GKRTYTMYRITVALTSLNCVADPILYCFV) traverse the membrane as a helical segment. The Cytoplasmic segment spans residues 294–337 (TETGRYDMWNILKFCTGRCNTSQRQRKRILSVSTKDTMELEVLE).

It belongs to the G-protein coupled receptor 1 family. Predominantly expressed in thymus, spleen, lymph nodes, small intestine, lung, placenta and peripheral blood leukocytes.

It localises to the cell membrane. Its subcellular location is the early endosome membrane. The protein localises to the late endosome membrane. Its activity is regulated as follows. Activated by a network of residues that connects an extracellular-facing cavity to Glu-142, a conserved charged residue buried in the transmembrane core of the receptor. Protonation likely drives conformational changes in extracellular loop 2 (ECL2), which stabilizes movement of transmembrane 3 (TM3) and a series of rearrangements that connect the extracellular-facing cavity to Glu-142, a residue only conserved in proton-sensing G-protein coupled receptors. Activated by BTB09089, a positive allosteric modulator. Its function is as follows. Proton-sensing G-protein coupled receptor activated by extracellular pH, which is required to monitor pH changes and generate adaptive reactions. Activated by an optimal pH of 7.4. Ligand binding causes a conformation change that triggers signaling via guanine nucleotide-binding proteins (G proteins) and modulates the activity of downstream effectors, such as adenylate cyclase. GPR65 is mainly coupled to G(s) G proteins and mediates activation of adenylate cyclase activity. May also act as a receptor for the glycosphingolipid psychosine (PSY) and several related glycosphingolipids. Plays a role in immune response by maintaining lysosome function and regulating T-cell metabolism. Acts as a regulator of inflammation by mediating pH-sensing of extracellular acidification which takes place in inflamed tissues: activation regulates endo-lysosomal function of immune cells and T-cell metabolism. Constitutively active in endosomes and stimulates adenylate cyclase production from endosomes independently from extracellular pH changes. This Homo sapiens (Human) protein is G-protein coupled receptor 65.